Reading from the N-terminus, the 454-residue chain is Tyrosine aminotransferase (454 aa).

Met-1 bears the N-acetylmethionine mark. Position 280 is an N6-(pyridoxal phosphate)lysine (Lys-280). The residue at position 448 (Ser-448) is a Phosphoserine.

It belongs to the class-I pyridoxal-phosphate-dependent aminotransferase family. As to quaternary structure, homodimer. Pyridoxal 5'-phosphate is required as a cofactor.

The catalysed reaction is L-tyrosine + 2-oxoglutarate = 3-(4-hydroxyphenyl)pyruvate + L-glutamate. The protein operates within amino-acid degradation; L-phenylalanine degradation; acetoacetate and fumarate from L-phenylalanine: step 2/6. In terms of biological role, transaminase involved in tyrosine breakdown. Converts tyrosine to p-hydroxyphenylpyruvate. Can catalyze the reverse reaction, using glutamic acid, with 2-oxoglutarate as cosubstrate (in vitro). Has much lower affinity and transaminase activity towards phenylalanine. This Homo sapiens (Human) protein is Tyrosine aminotransferase (TAT).